We begin with the raw amino-acid sequence, 478 residues long: GTPase Obg (478 aa).

One can recognise an Obg domain in the interval 2-159 (TTFVDRVELH…QDIHLELKTV (158 aa)). The tract at residues 60–88 (YHHSPHRKATNGKPGEGGNRSGKDGQDLV) is disordered. The region spanning 160-330 (ADVALVGYPS…LSFALAELVA (171 aa)) is the OBG-type G domain. GTP-binding positions include 166 to 173 (GYPSAGKS), 191 to 195 (FTTLV), 212 to 215 (DVPG), 282 to 285 (NKID), and 311 to 313 (SAV). Residues serine 173 and threonine 193 each coordinate Mg(2+). Residues 348-430 (PKAVDDAGFT…DNAVVFDWEP (83 aa)) form the OCT domain. Residues 438–478 (MLGRRGEDHRFEAPRPAAQRRRDRDAERDEAQQEFDGFEPF) form a disordered region. Composition is skewed to basic and acidic residues over residues 439–450 (LGRRGEDHRFEA) and 457–468 (RRRDRDAERDEA). Acidic residues predominate over residues 469-478 (QQEFDGFEPF).

Belongs to the TRAFAC class OBG-HflX-like GTPase superfamily. OBG GTPase family. As to quaternary structure, monomer. Requires Mg(2+) as cofactor.

Its subcellular location is the cytoplasm. The protein localises to the cell membrane. Functionally, plays an unknown essential role and a regulatory role in sporulation. Overexpression suppresses sporulation although cell growth rate was not reduced. Impaired differentiation was eliminated by addition of decoyinine, an inhibitor of GMP synthesis. Overexpression has no effect on undecylprodigiosin production, but decreases actinorhodin production. Its function is as follows. An essential GTPase which binds GTP, GDP and possibly (p)ppGpp with moderate affinity, with high nucleotide exchange rates and a fairly low GTP hydrolysis rate. Plays a role in control of the cell cycle, stress response, ribosome biogenesis and in those bacteria that undergo differentiation, in morphogenesis control. The chain is GTPase Obg from Streptomyces coelicolor (strain ATCC BAA-471 / A3(2) / M145).